A 470-amino-acid chain; its full sequence is Uronate isomerase (470 aa).

Belongs to the metallo-dependent hydrolases superfamily. Uronate isomerase family.

It carries out the reaction D-glucuronate = D-fructuronate. It catalyses the reaction aldehydo-D-galacturonate = keto-D-tagaturonate. Its pathway is carbohydrate metabolism; pentose and glucuronate interconversion. In Escherichia fergusonii (strain ATCC 35469 / DSM 13698 / CCUG 18766 / IAM 14443 / JCM 21226 / LMG 7866 / NBRC 102419 / NCTC 12128 / CDC 0568-73), this protein is Uronate isomerase.